We begin with the raw amino-acid sequence, 158 residues long: Large ribosomal subunit protein uL16 (158 aa).

The segment at Met1 to Thr22 is disordered.

This sequence belongs to the universal ribosomal protein uL16 family. In terms of assembly, part of the 50S ribosomal subunit.

Functionally, binds 23S rRNA and is also seen to make contacts with the A and possibly P site tRNAs. This is Large ribosomal subunit protein uL16 from Synechococcus sp. (strain JA-3-3Ab) (Cyanobacteria bacterium Yellowstone A-Prime).